We begin with the raw amino-acid sequence, 40 residues long: Accessory gland-specific peptide 57Db (40 aa).

The first 17 residues, 1–17 (MKITSALVLLFAGVAFA), serve as a signal peptide directing secretion.

As to expression, lumen fluid of male accessory glands, becomes seminal fluid.

It localises to the secreted. In terms of biological role, transferred from male to female during mating and may affect egglaying and behavior after mating. The sequence is that of Accessory gland-specific peptide 57Db (Mst57Db) from Drosophila melanogaster (Fruit fly).